Here is a 180-residue protein sequence, read N- to C-terminus: NADH-quinone oxidoreductase subunit I (180 aa).

2 4Fe-4S ferredoxin-type domains span residues 48–80 and 90–119; these read IVLT…LQKA and EFFR…LTPD. 8 residues coordinate [4Fe-4S] cluster: Cys60, Cys63, Cys66, Cys70, Cys99, Cys102, Cys105, and Cys109.

It belongs to the complex I 23 kDa subunit family. As to quaternary structure, NDH-1 is composed of 13 different subunits. Subunits NuoA, H, J, K, L, M, N constitute the membrane sector of the complex. The cofactor is [4Fe-4S] cluster.

It is found in the cell inner membrane. The catalysed reaction is a quinone + NADH + 5 H(+)(in) = a quinol + NAD(+) + 4 H(+)(out). Functionally, NDH-1 shuttles electrons from NADH, via FMN and iron-sulfur (Fe-S) centers, to quinones in the respiratory chain. The immediate electron acceptor for the enzyme in this species is believed to be ubiquinone. Couples the redox reaction to proton translocation (for every two electrons transferred, four hydrogen ions are translocated across the cytoplasmic membrane), and thus conserves the redox energy in a proton gradient. This chain is NADH-quinone oxidoreductase subunit I, found in Sodalis glossinidius (strain morsitans).